Consider the following 506-residue polypeptide: 2-isopropylmalate synthase (506 aa).

The region spanning 4–266 (ILFMDTTLRD…EPSMTLKEIK (263 aa)) is the Pyruvate carboxyltransferase domain. Residues Asp13, His201, His203, and Asn237 each contribute to the Mn(2+) site. The tract at residues 390-506 (NITQLQVHFV…KLKSFIQLVK (117 aa)) is regulatory domain.

Belongs to the alpha-IPM synthase/homocitrate synthase family. LeuA type 1 subfamily. In terms of assembly, homodimer. Mn(2+) is required as a cofactor.

Its subcellular location is the cytoplasm. The catalysed reaction is 3-methyl-2-oxobutanoate + acetyl-CoA + H2O = (2S)-2-isopropylmalate + CoA + H(+). It functions in the pathway amino-acid biosynthesis; L-leucine biosynthesis; L-leucine from 3-methyl-2-oxobutanoate: step 1/4. Functionally, catalyzes the condensation of the acetyl group of acetyl-CoA with 3-methyl-2-oxobutanoate (2-ketoisovalerate) to form 3-carboxy-3-hydroxy-4-methylpentanoate (2-isopropylmalate). This chain is 2-isopropylmalate synthase, found in Bacillus thuringiensis (strain Al Hakam).